The chain runs to 359 residues: Dual-specificity RNA methyltransferase RlmN (359 aa).

The active-site Proton acceptor is Glu86. One can recognise a Radical SAM core domain in the interval 105-338 (EGEKYTICVS…CTIRESKGID (234 aa)). Cys112 and Cys343 are joined by a disulfide. The [4Fe-4S] cluster site is built by Cys119, Cys123, and Cys126. S-adenosyl-L-methionine-binding positions include 169-170 (GE), Ser201, 224-226 (SLH), and Asn300. Residue Cys343 is the S-methylcysteine intermediate of the active site.

This sequence belongs to the radical SAM superfamily. RlmN family. It depends on [4Fe-4S] cluster as a cofactor.

The protein resides in the cytoplasm. It catalyses the reaction adenosine(2503) in 23S rRNA + 2 reduced [2Fe-2S]-[ferredoxin] + 2 S-adenosyl-L-methionine = 2-methyladenosine(2503) in 23S rRNA + 5'-deoxyadenosine + L-methionine + 2 oxidized [2Fe-2S]-[ferredoxin] + S-adenosyl-L-homocysteine. The catalysed reaction is adenosine(37) in tRNA + 2 reduced [2Fe-2S]-[ferredoxin] + 2 S-adenosyl-L-methionine = 2-methyladenosine(37) in tRNA + 5'-deoxyadenosine + L-methionine + 2 oxidized [2Fe-2S]-[ferredoxin] + S-adenosyl-L-homocysteine. Specifically methylates position 2 of adenine 2503 in 23S rRNA and position 2 of adenine 37 in tRNAs. m2A2503 modification seems to play a crucial role in the proofreading step occurring at the peptidyl transferase center and thus would serve to optimize ribosomal fidelity. The protein is Dual-specificity RNA methyltransferase RlmN of Wolinella succinogenes (strain ATCC 29543 / DSM 1740 / CCUG 13145 / JCM 31913 / LMG 7466 / NCTC 11488 / FDC 602W) (Vibrio succinogenes).